We begin with the raw amino-acid sequence, 470 residues long: Protein naked cuticle homolog 1 (470 aa).

Disordered stretches follow at residues 1–21 (MGKL…PEGD) and 90–114 (PPEK…PCPG). The N-myristoyl glycine moiety is linked to residue glycine 2. Positions 92-109 (EKTDGLGSGDEKKMERVS) are enriched in basic and acidic residues. Residues 125-190 (QCDVSMEEDS…LRVKLTVAPD (66 aa)) form an interaction with DVL1, DVL2 and DVL3 region. Positions 131 to 166 (EEDSRQEWTFTLYDFDNNGKVTREDITSLLHTIYEV) constitute an EF-hand domain. 5 residues coordinate Ca(2+): aspartate 144, aspartate 146, asparagine 148, lysine 150, and aspartate 155. Over residues 192 to 205 (SQSKRSVLVNQADL) the composition is skewed to polar residues. Disordered stretches follow at residues 192 to 228 (SQSK…KKQR), 271 to 314 (QFGP…QGVD), 337 to 357 (GTQD…KSVG), and 446 to 470 (GQPV…FYQT). The segment covering 210–227 (PRAETKPTEDLRSWEKKQ) has biased composition (basic and acidic residues). Residues 271–281 (QFGPGSPSVAQ) are compositionally biased toward polar residues. Over residues 452–470 (HEHHHHHEHHHHYHHFYQT) the composition is skewed to basic residues.

Belongs to the NKD family. In terms of assembly, interacts with DVL1, DVL2, DVL3 and PPP2R3A. As to expression, expressed in colon, heart, kidney, leukocyte, liver, lung, ovary, pancreas, placenta, prostate, skeletal muscle, small intestine and spleen.

The protein resides in the cell membrane. It is found in the cytoplasm. In terms of biological role, cell autonomous antagonist of the canonical Wnt signaling pathway. May activate a second Wnt signaling pathway that controls planar cell polarity. This Homo sapiens (Human) protein is Protein naked cuticle homolog 1 (NKD1).